Here is a 75-residue protein sequence, read N- to C-terminus: DNA-directed RNA polymerase subunit omega (75 aa).

This sequence belongs to the RNA polymerase subunit omega family. As to quaternary structure, in cyanobacteria the RNAP catalytic core is composed of 2 alpha, 1 beta, 1 beta', 1 gamma and 1 omega subunit. When a sigma factor is associated with the core the holoenzyme is formed, which can initiate transcription.

It catalyses the reaction RNA(n) + a ribonucleoside 5'-triphosphate = RNA(n+1) + diphosphate. Promotes RNA polymerase assembly. Latches the N- and C-terminal regions of the beta' subunit thereby facilitating its interaction with the beta and alpha subunits. The protein is DNA-directed RNA polymerase subunit omega of Synechococcus sp. (strain CC9605).